The chain runs to 252 residues: NADH-quinone oxidoreductase subunit E (252 aa).

Residues Cys-114, Cys-119, Cys-155, and Cys-159 each coordinate [2Fe-2S] cluster. Residues 211–252 (LAGLPDQRPDEGQGGPGAPTLAGLQVARKNDMQAPPTPGADE) form a disordered region.

The protein belongs to the complex I 24 kDa subunit family. [2Fe-2S] cluster serves as cofactor.

It carries out the reaction a quinone + NADH + 5 H(+)(in) = a quinol + NAD(+) + 4 H(+)(out). NDH-1 shuttles electrons from NADH, via FMN and iron-sulfur (Fe-S) centers, to quinones in the respiratory chain. The immediate electron acceptor for the enzyme in this species is believed to be menaquinone. Couples the redox reaction to proton translocation (for every two electrons transferred, four hydrogen ions are translocated across the cytoplasmic membrane), and thus conserves the redox energy in a proton gradient. The chain is NADH-quinone oxidoreductase subunit E (nuoE) from Mycobacterium bovis (strain ATCC BAA-935 / AF2122/97).